Here is a 129-residue protein sequence, read N- to C-terminus: Sulfurtransferase TusD (129 aa).

C79 functions as the Cysteine persulfide intermediate in the catalytic mechanism.

This sequence belongs to the DsrE/TusD family. Heterohexamer, formed by a dimer of trimers. The hexameric TusBCD complex contains 2 copies each of TusB, TusC and TusD. The TusBCD complex interacts with TusE.

It is found in the cytoplasm. Part of a sulfur-relay system required for 2-thiolation of 5-methylaminomethyl-2-thiouridine (mnm(5)s(2)U) at tRNA wobble positions. Accepts sulfur from TusA and transfers it in turn to TusE. The polypeptide is Sulfurtransferase TusD (Serratia proteamaculans (strain 568)).